Here is a 232-residue protein sequence, read N- to C-terminus: Ribose-5-phosphate isomerase A (232 aa).

Substrate is bound by residues 31 to 34 (TGST), 88 to 91 (DGAD), and 101 to 104 (KGGG). Glu110 acts as the Proton acceptor in catalysis. A substrate-binding site is contributed by Lys128.

Belongs to the ribose 5-phosphate isomerase family. As to quaternary structure, homodimer.

The enzyme catalyses aldehydo-D-ribose 5-phosphate = D-ribulose 5-phosphate. It functions in the pathway carbohydrate degradation; pentose phosphate pathway; D-ribose 5-phosphate from D-ribulose 5-phosphate (non-oxidative stage): step 1/1. Its function is as follows. Catalyzes the reversible conversion of ribose-5-phosphate to ribulose 5-phosphate. The protein is Ribose-5-phosphate isomerase A of Lactobacillus johnsonii (strain CNCM I-12250 / La1 / NCC 533).